The chain runs to 317 residues: MPMQGAQRRLLGSLNSTPTATPNLGLAANHTGAPCLEVSIPDGLFLSLGLVSLVENVLVVAAIAKNRNLHSPMYCFICCLALSDLLVSGSNMLEMAVILLLEAGALATRASVVQQLQNTIDVLTCSSMLCSLCFLGAIAVDRYVSIFYALRYHSIVTLPRARRAIAAIWVASVLSSTLFIAYCDHAAVLLCLVVFFLAMLVLMAVLYVHMLARACQHAQGITRLHKRQLPAHQGFGLRGAATLTILLGIFFVCWGPFFLHLMLVVLCPQHLTCSCIFKNFKVFLTLIICNTIIDPLIYAFRSQELCRTLKEVLLCSW.

Over 1–37 the chain is Extracellular; sequence MPMQGAQRRLLGSLNSTPTATPNLGLAANHTGAPCLE. Asn-29 carries an N-linked (GlcNAc...) asparagine glycan. A helical membrane pass occupies residues 38–63; the sequence is VSIPDGLFLSLGLVSLVENVLVVAAI. At 64–72 the chain is on the cytoplasmic side; the sequence is AKNRNLHSP. Residues 73–93 traverse the membrane as a helical segment; sequence MYCFICCLALSDLLVSGSNML. The Extracellular portion of the chain corresponds to 94-118; sequence EMAVILLLEAGALATRASVVQQLQN. A helical membrane pass occupies residues 119–140; it reads TIDVLTCSSMLCSLCFLGAIAV. Topologically, residues 141–163 are cytoplasmic; the sequence is DRYVSIFYALRYHSIVTLPRARR. Residues 164–183 traverse the membrane as a helical segment; it reads AIAAIWVASVLSSTLFIAYC. Residues 184–191 are Extracellular-facing; that stretch reads DHAAVLLC. Residues 192–211 form a helical membrane-spanning segment; it reads LVVFFLAMLVLMAVLYVHML. Over 212-240 the chain is Cytoplasmic; sequence ARACQHAQGITRLHKRQLPAHQGFGLRGA. The helical transmembrane segment at 241 to 266 threads the bilayer; that stretch reads ATLTILLGIFFVCWGPFFLHLMLVVL. Residues 267-279 are Extracellular-facing; the sequence is CPQHLTCSCIFKN. The chain crosses the membrane as a helical span at residues 280–300; sequence FKVFLTLIICNTIIDPLIYAF. At 301 to 317 the chain is on the cytoplasmic side; that stretch reads RSQELCRTLKEVLLCSW. Cys-315 carries the S-palmitoyl cysteine lipid modification.

It belongs to the G-protein coupled receptor 1 family. As to quaternary structure, interacts with MGRN1, but does not undergo MGRN1-mediated ubiquitination; this interaction competes with GNAS-binding and thus inhibits agonist-induced cAMP production. Interacts with OPN3; the interaction results in a decrease in MC1R-mediated cAMP signaling and ultimately a decrease in melanin production in melanocytes.

The protein localises to the cell membrane. In terms of biological role, receptor for MSH (alpha, beta and gamma) and ACTH. The activity of this receptor is mediated by G proteins which activate adenylate cyclase. Mediates melanogenesis, the production of eumelanin (black/brown) and phaeomelanin (red/yellow), via regulation of cAMP signaling in melanocytes. This Alouatta sara (Bolivian red howler monkey) protein is Melanocyte-stimulating hormone receptor (MC1R).